A 718-amino-acid polypeptide reads, in one-letter code: Ubiquitin homeostasis protein lub1 (718 aa).

WD repeat units lie at residues 12-50 (GHKQDVRGVCSISNELIGSASRDGTYSVWEQINGEWTPH), 54-98 (NHEG…PSYY), 101-139 (GHESNICSASALNSETIITGSWDSTARVWALGQCKYVLK), 140-178 (GHQSSVWAVLALGEDIFITGSADKLIKIWNGEKLVKSIL), 180-217 (HNDCVRSLCQIPGGFASCSNDGVIKLWTSDGEFLYELH), 218-257 (GHTSFVYSLTYIHNQQLIASCGEDRTIRIWKGKECLQCIT), and 259-296 (PTTSVWSVSSLPNGDLVCGSSDGFVRIFTVDKVRVAPT). Residues 353–448 (QWSQKENEWK…QGHSLESKKE (96 aa)) enclose the PFU domain. In terms of domain architecture, PUL spans 462–717 (TIFPVSQLLF…VDAEKQILSL (256 aa)).

As to quaternary structure, interacts with cdc48.

Its subcellular location is the nucleus. It is found in the cytoplasm. Functionally, acts as a negative regulator of vacuole-dependent ubiquitin degradation. This Schizosaccharomyces pombe (strain 972 / ATCC 24843) (Fission yeast) protein is Ubiquitin homeostasis protein lub1 (lub1).